Reading from the N-terminus, the 35-residue chain is Photosystem II reaction center protein M (35 aa).

A helical transmembrane segment spans residues 7–27 (GLLATILVILVPSIFLVILYV).

It belongs to the PsbM family. In terms of assembly, PSII is composed of 1 copy each of membrane proteins PsbA, PsbB, PsbC, PsbD, PsbE, PsbF, PsbH, PsbI, PsbJ, PsbK, PsbL, PsbM, PsbT, PsbX, PsbY, PsbZ, Psb30/Ycf12, peripheral proteins PsbO, CyanoQ (PsbQ), PsbU, PsbV and a large number of cofactors. It forms dimeric complexes.

It is found in the cellular thylakoid membrane. In terms of biological role, one of the components of the core complex of photosystem II (PSII). PSII is a light-driven water:plastoquinone oxidoreductase that uses light energy to abstract electrons from H(2)O, generating O(2) and a proton gradient subsequently used for ATP formation. It consists of a core antenna complex that captures photons, and an electron transfer chain that converts photonic excitation into a charge separation. This subunit is found at the monomer-monomer interface. The chain is Photosystem II reaction center protein M from Synechococcus sp. (strain JA-3-3Ab) (Cyanobacteria bacterium Yellowstone A-Prime).